The primary structure comprises 174 residues: WAP four-disulfide core domain protein 2 (174 aa).

The signal sequence occupies residues 1 to 25 (MPACRLCLLAAGLLLGLLLFTPISA). The WAP 1 domain maps to 29–74 (DAEKPGECPQLEPITDCVLECTLDKDCADNRKCCQAGCSSVCSKPN). Intrachain disulfides connect C36/C62, C45/C66, C49/C61, and C55/C70. Positions 68 to 117 (SVCSKPNGPSEGELSGTDTKLSETGTTTQSAGLDHTTKPPGGQVSTKPPA) are disordered. Over residues 83–98 (GTDTKLSETGTTTQSA) the composition is skewed to polar residues. In terms of domain architecture, WAP 2 spans 125 to 173 (VREKQGTCPSVDIPKLGLCEDQCQVDSQCSGNMKCCRNGCGKMACTTPK). Intrachain disulfides connect C132–C160, C143–C164, C147–C159, and C153–C169.

As to quaternary structure, homotrimer; disulfide-linked.

It is found in the secreted. Broad range protease inhibitor. The protein is WAP four-disulfide core domain protein 2 (Wfdc2) of Mus musculus (Mouse).